Reading from the N-terminus, the 428-residue chain is Histidine--tRNA ligase (428 aa).

This sequence belongs to the class-II aminoacyl-tRNA synthetase family. In terms of assembly, homodimer.

The protein localises to the cytoplasm. The enzyme catalyses tRNA(His) + L-histidine + ATP = L-histidyl-tRNA(His) + AMP + diphosphate + H(+). This chain is Histidine--tRNA ligase, found in Chlamydia trachomatis serovar A (strain ATCC VR-571B / DSM 19440 / HAR-13).